The following is a 426-amino-acid chain: Glutamate-1-semialdehyde 2,1-aminomutase (426 aa).

Lys265 carries the post-translational modification N6-(pyridoxal phosphate)lysine.

It belongs to the class-III pyridoxal-phosphate-dependent aminotransferase family. HemL subfamily. As to quaternary structure, homodimer. It depends on pyridoxal 5'-phosphate as a cofactor.

Its subcellular location is the cytoplasm. It catalyses the reaction (S)-4-amino-5-oxopentanoate = 5-aminolevulinate. Its pathway is porphyrin-containing compound metabolism; protoporphyrin-IX biosynthesis; 5-aminolevulinate from L-glutamyl-tRNA(Glu): step 2/2. The protein is Glutamate-1-semialdehyde 2,1-aminomutase of Shigella sonnei (strain Ss046).